A 115-amino-acid polypeptide reads, in one-letter code: Immunoglobulin kappa chain variable 12-41 (115 aa).

The signal sequence occupies residues 1 to 20 (MSVLTQVLALLLLWLTGARC). The framework-1 stretch occupies residues 21 to 43 (DIQMTQSPASLSASVGETVTITC). C43 and C108 are joined by a disulfide. The interval 44–54 (RASGNIHNYLA) is complementarity-determining-1. The interval 55 to 69 (WYQQKQGKSPQLLVY) is framework-2. Residues 70-76 (NAKTLAD) are complementarity-determining-2. A framework-3 region spans residues 77-108 (GVPSRFSGSGSGTQYSLKINSLQPEDFGSYYC). The complementarity-determining-3 stretch occupies residues 109–115 (QHFWSTP).

The polypeptide is Immunoglobulin kappa chain variable 12-41 (Mus musculus (Mouse)).